The primary structure comprises 490 residues: Betaine aldehyde dehydrogenase (490 aa).

Residues Thr26 and Asp93 each contribute to the K(+) site. 150–152 (GAW) contributes to the NAD(+) binding site. Residue Lys162 is the Charge relay system of the active site. 176–179 (KPSE) contacts NAD(+). Residue Val180 participates in K(+) binding. 230–233 (GVAT) contributes to the NAD(+) binding site. Leu246 contacts K(+). Glu252 acts as the Proton acceptor in catalysis. Gly254, Cys286, and Glu387 together coordinate NAD(+). Cys286 (nucleophile) is an active-site residue. Cys286 carries the post-translational modification Cysteine sulfenic acid (-SOH). Residues Lys457 and Gly460 each contribute to the K(+) site. The active-site Charge relay system is Glu464.

The protein belongs to the aldehyde dehydrogenase family. Dimer of dimers. K(+) is required as a cofactor.

It carries out the reaction betaine aldehyde + NAD(+) + H2O = glycine betaine + NADH + 2 H(+). It participates in amine and polyamine biosynthesis; betaine biosynthesis via choline pathway; betaine from betaine aldehyde: step 1/1. In terms of biological role, involved in the biosynthesis of the osmoprotectant glycine betaine. Catalyzes the irreversible oxidation of betaine aldehyde to the corresponding acid. The polypeptide is Betaine aldehyde dehydrogenase (Stenotrophomonas maltophilia (strain K279a)).